Consider the following 321-residue polypeptide: MDFRLLNEKSQIFVHAEPYAVSDYVNQYVGTHSIRLPKGGRPAGRLHHRIFGGLDLCRISYGGSVRVISPGLETCYHLQIILKGHCLWRDHGQEHYFAPGELLLLNPDDQADLTYSEDCEKFIVKLPSVVLDRACSENNWHKPREGIRFAARHNLQQLDGFINLLGLVCDEAEHTKSMPRVQEHYAGIIASKLLEMLGSNVSREIFSKGNPSFERVVQFIEENLKRNISLERLAELAMMSPRSLYNLFEKHAGTTPKNYIRNRKLESIRACLNDPSANVRSITEIALDYGFLHLGRFAENYRSAFGELPSDTLRQCKKEVA.

One can recognise an HTH araC/xylS-type domain in the interval 214–315 (ERVVQFIEEN…GELPSDTLRQ (102 aa)). DNA-binding regions (H-T-H motif) lie at residues 231-252 (ERLA…EKHA) and 282-305 (ITEI…RSAF).

The protein localises to the cytoplasm. Functionally, regulatory protein of the TOL plasmid xyl operons. XylS activates the xylXYZLTEGFJQKIH operon required for the degradation of toluene, m-xylene and p-xylene. This chain is XylDLEGF operon transcriptional activator 1 (xylS1), found in Pseudomonas putida (Arthrobacter siderocapsulatus).